The sequence spans 1374 residues: DNA-directed RNA polymerase subunit beta' (1374 aa).

Residues 1-47 form a disordered region; that stretch reads MTSTSPKSRKPSTKTTKSKSKSKSKSKAAKAAAASASPALARTPPQF. A compositionally biased stretch (basic residues) spans 7–28; the sequence is KSRKPSTKTTKSKSKSKSKSKA. The span at 29 to 45 shows a compositional bias: low complexity; sequence AKAAAASASPALARTPP. Residues cysteine 258, cysteine 325, cysteine 332, and cysteine 335 each contribute to the Zn(2+) site. A disordered region spans residues 1343–1374; it reads VRPTGENELEEEQLPDPSALEGLQQEGLLTEE. Low complexity predominate over residues 1362–1374; that stretch reads LEGLQQEGLLTEE.

Belongs to the RNA polymerase beta' chain family. RpoC2 subfamily. As to quaternary structure, in cyanobacteria the RNAP catalytic core is composed of 2 alpha, 1 beta, 1 beta', 1 gamma and 1 omega subunit. When a sigma factor is associated with the core the holoenzyme is formed, which can initiate transcription. Requires Zn(2+) as cofactor.

The enzyme catalyses RNA(n) + a ribonucleoside 5'-triphosphate = RNA(n+1) + diphosphate. In terms of biological role, DNA-dependent RNA polymerase catalyzes the transcription of DNA into RNA using the four ribonucleoside triphosphates as substrates. This Prochlorococcus marinus (strain MIT 9303) protein is DNA-directed RNA polymerase subunit beta'.